The sequence spans 841 residues: MAAPILKDVVAYVEVWSSNGTENYSKTFTTQLVDMGAKVSKTFNKQVTHVIFKDGYQSTWDKAQKRGVKLVSVLWVEKCRTAGAHIDESLFPAANTNEHLPSLIKKKRKCMQPKDFNFKTPENDKRFQKKFEKMANELQRQKTSLDGDVPILLFESNGSLTYSPIIKINSSHHSAMEKRLQEMKEKRENLSPTSSQMIQQSHDNPSNSLCEAPLNISHDTLCSDESIAGLHSSFDDLCGYSGCGNQERKLGGSINDTKSAMCVSSLVLKTNHIHSSPSFAHLDKSSPQKFLSNLSKEEINLPRNIVGKIVTPDQKQAAGTSQETFEEKYRLSPTFSSTKGHLLIHSRPRSSSVKRKRVSYGFHSPPKEKCKRKRSIRRSIMPRLQLCSSEGSRQHMAGPALEALSCAESSYDDYFSPDNLKERNSENLPPESQLPSSPAQFSCRSLSKKERTSMFEMSDFSCIGKKTRTVDMTSFTAKTISSPQKTANGEGRATLSGVTSEESSAPEETLRCCRQAGPQQKEGACPEGNGFSYTIEDPALPKGHDGDLTPLEGILEEVKEAVGLKSTQDKGTTSKISNSSEGEASSEHEPRSVVDCNVERSAEEKENLLGGYSGSVKNRPTRHDVLDGSCDSFKDLIKPHEELKKSGKGKKPTRTLVMTSMPSEKQNIVIQVVDKLKGFSIAPDVCETTTHVLSGKPLRTLNVLLGIARGCWVLSYDWVLWSLESGHWISEESFELSNHFPAAPLCRRECHLSAGPYRGTLFADQPVMFVSPASSPPVAKLCELVHLCGGRVSQVPRQASIVIGPYSGKKKATVKYLSEKWVLDSITQHKVCASENYLLPQ.

Residues 1–93 enclose the BRCT 1 domain; the sequence is MAAPILKDVV…AHIDESLFPA (93 aa). Phosphoserine is present on residues Ser-278, Ser-286, Ser-295, and Ser-332. Thr-334 is subject to Phosphothreonine. Disordered regions lie at residues 340–375, 417–445, 481–507, and 562–593; these read GHLL…RKRS, PDNL…SCRS, SSPQ…SAPE, and VGLK…PRSV. A compositionally biased stretch (basic residues) spans 342 to 358; that stretch reads LLIHSRPRSSSVKRKRV. Over residues 433–445 the composition is skewed to polar residues; that stretch reads QLPSSPAQFSCRS. The span at 565–583 shows a compositional bias: polar residues; it reads KSTQDKGTTSKISNSSEGE. 2 consecutive BRCT domains span residues 646 to 736 and 757 to 839; these read SGKG…SFEL and YRGT…NYLL.

Interacts with CDC27 and maybe other components of the APC/C complex. Interacts with histone variant H2AX under DNA damage conditions.

It is found in the cytoplasm. The protein resides in the cytoskeleton. The protein localises to the microtubule organizing center. Its subcellular location is the centrosome. Its function is as follows. Implicated in chromosome condensation and DNA damage induced cellular responses. May play a role in neurogenesis and regulation of the size of the cerebral cortex. This Colobus guereza (Mantled guereza) protein is Microcephalin.